Consider the following 79-residue polypeptide: Acyl carrier protein (79 aa).

In terms of domain architecture, Carrier spans 2 to 77 (SDIGERVKKI…DATKFLEKNA (76 aa)). O-(pantetheine 4'-phosphoryl)serine is present on S37.

It belongs to the acyl carrier protein (ACP) family. In terms of processing, 4'-phosphopantetheine is transferred from CoA to a specific serine of apo-ACP by AcpS. This modification is essential for activity because fatty acids are bound in thioester linkage to the sulfhydryl of the prosthetic group.

The protein resides in the cytoplasm. It functions in the pathway lipid metabolism; fatty acid biosynthesis. In terms of biological role, carrier of the growing fatty acid chain in fatty acid biosynthesis. This is Acyl carrier protein from Bradyrhizobium diazoefficiens (strain JCM 10833 / BCRC 13528 / IAM 13628 / NBRC 14792 / USDA 110).